The following is a 280-amino-acid chain: Probable 6-phosphogluconolactonase 2 (280 aa).

Belongs to the glucosamine/galactosamine-6-phosphate isomerase family. 6-phosphogluconolactonase subfamily.

It catalyses the reaction 6-phospho-D-glucono-1,5-lactone + H2O = 6-phospho-D-gluconate + H(+). It participates in carbohydrate degradation; pentose phosphate pathway; D-ribulose 5-phosphate from D-glucose 6-phosphate (oxidative stage): step 2/3. Hydrolysis of 6-phosphogluconolactone to 6-phosphogluconate. The chain is Probable 6-phosphogluconolactonase 2 from Oryza sativa subsp. indica (Rice).